A 600-amino-acid chain; its full sequence is Cationic amino acid transporter 4, vacuolar (600 aa).

Residues 1–32 are Cytoplasmic-facing; the sequence is MNSLVRRKQVDSVHLIKNDGPHQLAKKLSAVD. A helical membrane pass occupies residues 33-53; that stretch reads LVAIGVGTTIGAGVYILVGTV. At 54 to 60 the chain is on the vacuolar side; that stretch reads AREHTGP. A helical membrane pass occupies residues 61–81; it reads ALAVSFFIAGVAAALSACCYA. Topologically, residues 82-92 are cytoplasmic; sequence ELASRCPSAGS. The chain crosses the membrane as a helical span at residues 93-115; that stretch reads AYHYAYICLGEGIAWLVGWALVL. The Vacuolar segment spans residues 116-152; that stretch reads DYTIGGSAIARGITPNLASFFGGLDNLPVFLARQTIP. The helical transmembrane segment at 153 to 173 threads the bilayer; sequence GVGIVVDPCAALLIMIVTILL. The Cytoplasmic segment spans residues 174–184; that stretch reads CFGIKESSTVQ. The chain crosses the membrane as a helical span at residues 185-205; it reads AIVTSVNVCTLVFIIVVGGYL. Over 206-220 the chain is Vacuolar; the sequence is ACKTGWVGYDLPSGY. A helical membrane pass occupies residues 221 to 241; it reads FPFGLNGILAGSAVVFFSYIG. The Cytoplasmic portion of the chain corresponds to 242–264; sequence FDTVTSTAEEVKNPQRDLPLGIG. Residues 265–285 form a helical membrane-spanning segment; sequence IALLICCILYMLLSVVIVGLV. The Vacuolar segment spans residues 286 to 308; it reads PYYSLNPDTPISSAFGDSGMQWA. The chain crosses the membrane as a helical span at residues 309 to 329; sequence AYILTTGAITALCASLLGSLL. Residues 330 to 360 are Cytoplasmic-facing; the sequence is AQPRIFMAMARDGLLPAFFSEISPRTQVPVK. The chain crosses the membrane as a helical span at residues 361–381; sequence STIAIGVLAAALAFFMDVAQL. A topological domain (vacuolar) is located at residue Ser382. A helical transmembrane segment spans residues 383–403; the sequence is EMVSVGTLMAFTAVAVCVLVL. The Cytoplasmic segment spans residues 404–462; the sequence is RYVPPDGVPLSSSSQTLSDTDESRAETENFLVDAIESSDSPLLGNETARDEKYFGKRRK. The chain crosses the membrane as a helical span at residues 463–483; the sequence is IAAWSIALVCIGVLGLASAAS. Residues 484–492 are Vacuolar-facing; sequence AERLPSFPR. A helical transmembrane segment spans residues 493–513; the sequence is FTICGVSAVILLGSLITLGYI. Residues 514-528 lie on the Cytoplasmic side of the membrane; the sequence is DEDEERHNFGHKGGF. Residues 529–549 traverse the membrane as a helical segment; sequence LCPFVPYLPVLCILINTYLII. Residue Asn550 is a topological domain, vacuolar. Residues 551-571 form a helical membrane-spanning segment; the sequence is IGAGTWIRVLIWLLIGSMIYI. Over 572–600 the chain is Cytoplasmic; the sequence is FYGRSHSLLNNAVYVPTMTCTRKTTDHLA.

This sequence belongs to the amino acid-polyamine-organocation (APC) superfamily. Cationic amino acid transporter (CAT) (TC 2.A.3.3) family. In terms of tissue distribution, expressed in roots, stems, flowers, and leaves.

It localises to the vacuole membrane. In terms of biological role, permease involved in the transport of the cationic amino acids. In Arabidopsis thaliana (Mouse-ear cress), this protein is Cationic amino acid transporter 4, vacuolar (CAT4).